Here is a 321-residue protein sequence, read N- to C-terminus: Glucokinase (321 aa).

8–13 (GDVGGT) is a binding site for ATP.

The protein belongs to the bacterial glucokinase family.

Its subcellular location is the cytoplasm. It carries out the reaction D-glucose + ATP = D-glucose 6-phosphate + ADP + H(+). The sequence is that of Glucokinase from Psychromonas ingrahamii (strain DSM 17664 / CCUG 51855 / 37).